Reading from the N-terminus, the 297-residue chain is Ribosomal RNA small subunit methyltransferase H (297 aa).

S-adenosyl-L-methionine contacts are provided by residues 37–39, glutamate 56, phenylalanine 87, aspartate 102, and histidine 109; that span reads GGH.

Belongs to the methyltransferase superfamily. RsmH family.

Its subcellular location is the cytoplasm. The enzyme catalyses cytidine(1402) in 16S rRNA + S-adenosyl-L-methionine = N(4)-methylcytidine(1402) in 16S rRNA + S-adenosyl-L-homocysteine + H(+). Specifically methylates the N4 position of cytidine in position 1402 (C1402) of 16S rRNA. In Borrelia hermsii (strain HS1 / DAH), this protein is Ribosomal RNA small subunit methyltransferase H.